A 130-amino-acid chain; its full sequence is Small ribosomal subunit protein uS9 (130 aa).

It belongs to the universal ribosomal protein uS9 family.

This is Small ribosomal subunit protein uS9 (rpsI) from Shigella flexneri.